Reading from the N-terminus, the 549-residue chain is Membrane protein insertase YidC (549 aa).

Residues 9–29 (LRLILAIALSFLFIALYSYFF) form a helical membrane-spanning segment. Residues 37–51 (TETTKQETTNNHTAT) are compositionally biased toward low complexity. A disordered region spans residues 37–56 (TETTKQETTNNHTATSPTAS). Transmembrane regions (helical) follow at residues 328–348 (VIEY…LDYL), 351–371 (FVGN…IILY), 417–437 (GANP…FFAI), 452–472 (WVLW…PLLM), and 498–518 (LLPL…VLYW).

The protein belongs to the OXA1/ALB3/YidC family. Type 1 subfamily. In terms of assembly, interacts with the Sec translocase complex via SecD. Specifically interacts with transmembrane segments of nascent integral membrane proteins during membrane integration.

Its subcellular location is the cell inner membrane. Its function is as follows. Required for the insertion and/or proper folding and/or complex formation of integral membrane proteins into the membrane. Involved in integration of membrane proteins that insert both dependently and independently of the Sec translocase complex, as well as at least some lipoproteins. Aids folding of multispanning membrane proteins. The chain is Membrane protein insertase YidC from Helicobacter pylori (strain J99 / ATCC 700824) (Campylobacter pylori J99).